Reading from the N-terminus, the 399-residue chain is Alpha-ketoglutarate-dependent dioxygenase fc-dox (399 aa).

Fe cation contacts are provided by histidine 158 and aspartate 160. Threonine 203 is a binding site for 2-oxoglutarate. A Fe cation-binding site is contributed by histidine 355. Arginine 367 serves as a coordination point for 2-oxoglutarate. The interval 371–399 (QGWLAGDRPPKGPVPIPDPRARSSIYYQK) is disordered.

The protein belongs to the TfdA dioxygenase family. Fe(2+) serves as cofactor.

The protein operates within mycotoxin biosynthesis. Functionally, alpha-ketoglutarate-dependent dioxygenase; part of the 2 gene clusters that mediate the biosynthesis of fusicoccins, diterpene glucosides that display phytohormone-like activity and function as potent activators of plasma membrane H(+)-ATPases in plants by modifying 14-3-3 proteins and cause the plant disease constriction canker. The first step in the pathway is performed by the fusicoccadiene synthase PaFS that possesses both prenyl transferase and terpene cyclase activity, converting isopentenyl diphosphate and dimethylallyl diphosphate into geranylgeranyl diphosphate (GGDP) and successively converting GGDP into fusicocca-2,10(14)-diene, a precursor for fusicoccin H. The second step is the oxidation at the C-8 position by the cytochrome P450 monooxygenase PaP450-2 to yield fusicocca-2,10(14)-diene-8-beta-ol. The cytochrome P450 monooxygenase PaP450-1 then catalyzes the hydroxylation at the C-16 position to produce fusicocca-2,10(14)-diene-8-beta,16-diol. The dioxygenase fc-dox then catalyzes the 16-oxydation of fusicocca-2,10(14)-diene-8-beta,16-diol to yield an aldehyde (8-beta-hydroxyfusicocca-1,10(14)-dien-16-al). The short-chain dehydrogenase/reductase fc-sdr catalyzes the reduction of the aldehyde to yield fusicocca-1,10(14)-diene-8-beta,16-diol. The next step is the hydroxylation at C-9 performed by the cytochrome P450 monooxygenase PaP450-3 that leads to fusicoccin H aglycon which is glycosylated to fusicoccin H by the O-glycosyltransferase PaGT. Hydroxylation at C-12 by the cytochrome P450 monooxygenase PaP450-4 leads then to the production of fusicoccin Q and is followed by methylation by the O-methyltransferase PaMT to yield fusicoccin P. Fusicoccin P is further converted to fusicoccin J via prenylation by the O-glucose prenyltransferase PaPT. Cytochrome P450 monooxygenase PaP450-5 then performs hydroxylation at C-19 to yield dideacetyl-fusicoccin A which is acetylated to 3'-O-deacetyl-fusicoccin A by the O-acetyltransferase PaAT-2. Finally, a another acetylation by the O-acetyltransferase PaAT-1 yields fusicoccin A. This Phomopsis amygdali (Fusicoccum amygdali) protein is Alpha-ketoglutarate-dependent dioxygenase fc-dox.